Reading from the N-terminus, the 275-residue chain is NH(3)-dependent NAD(+) synthetase (275 aa).

Residue 46–53 (GISGGQDS) coordinates ATP. Residue D52 coordinates Mg(2+). R140 serves as a coordination point for deamido-NAD(+). An ATP-binding site is contributed by T160. A Mg(2+)-binding site is contributed by E165. Residues K173 and D180 each contribute to the deamido-NAD(+) site. K189 and T211 together coordinate ATP. 260 to 261 (HK) lines the deamido-NAD(+) pocket.

The protein belongs to the NAD synthetase family. In terms of assembly, homodimer.

It catalyses the reaction deamido-NAD(+) + NH4(+) + ATP = AMP + diphosphate + NAD(+) + H(+). It functions in the pathway cofactor biosynthesis; NAD(+) biosynthesis; NAD(+) from deamido-NAD(+) (ammonia route): step 1/1. Catalyzes the ATP-dependent amidation of deamido-NAD to form NAD. Uses ammonia as a nitrogen source. This is NH(3)-dependent NAD(+) synthetase from Salmonella typhi.